We begin with the raw amino-acid sequence, 282 residues long: Acetylglutamate kinase (282 aa).

Substrate is bound by residues 62-63 (GG), arginine 84, and asparagine 178.

This sequence belongs to the acetylglutamate kinase family. ArgB subfamily.

It localises to the cytoplasm. The catalysed reaction is N-acetyl-L-glutamate + ATP = N-acetyl-L-glutamyl 5-phosphate + ADP. It participates in amino-acid biosynthesis; L-arginine biosynthesis; N(2)-acetyl-L-ornithine from L-glutamate: step 2/4. Functionally, catalyzes the ATP-dependent phosphorylation of N-acetyl-L-glutamate. In Thermotoga sp. (strain RQ2), this protein is Acetylglutamate kinase.